Consider the following 681-residue polypeptide: Methionine--tRNA ligase (681 aa).

The 'HIGH' region signature appears at 15–25; sequence PYANGPIHLGH. Positions 146, 149, 159, and 162 each coordinate Zn(2+). A 'KMSKS' region motif is present at residues 332 to 336; that stretch reads KMSKS. K335 is an ATP binding site. Positions 547-569 are disordered; it reads DNMAQAPKDNGKAKKDKKEAKSE. Residues 555-569 show a composition bias toward basic and acidic residues; the sequence is DNGKAKKDKKEAKSE. In terms of domain architecture, tRNA-binding spans 580–681; the sequence is DFAKIDLRIA…SGAQPGMQVK (102 aa).

It belongs to the class-I aminoacyl-tRNA synthetase family. MetG type 1 subfamily. In terms of assembly, homodimer. The cofactor is Zn(2+).

The protein localises to the cytoplasm. It carries out the reaction tRNA(Met) + L-methionine + ATP = L-methionyl-tRNA(Met) + AMP + diphosphate. Is required not only for elongation of protein synthesis but also for the initiation of all mRNA translation through initiator tRNA(fMet) aminoacylation. This chain is Methionine--tRNA ligase, found in Hahella chejuensis (strain KCTC 2396).